A 450-amino-acid polypeptide reads, in one-letter code: Probable glucoamylase (450 aa).

The first 16 residues, 1 to 16, serve as a signal peptide directing secretion; sequence MRTYWLFLLLGGVVSA. Residues 17–28 constitute a propeptide that is removed on maturation; that stretch reads ESLLSPNKRSKE. Trp147 is a substrate binding site. Catalysis depends on Asp203, which acts as the Proton acceptor. The active-site Proton donor is Glu206. Asn383 and Asn409 each carry an N-linked (GlcNAc...) asparagine glycan.

The protein belongs to the glycosyl hydrolase 15 family.

It catalyses the reaction Hydrolysis of terminal (1-&gt;4)-linked alpha-D-glucose residues successively from non-reducing ends of the chains with release of beta-D-glucose.. This chain is Probable glucoamylase (meu17), found in Schizosaccharomyces pombe (strain 972 / ATCC 24843) (Fission yeast).